The following is an 846-amino-acid chain: Circadian locomoter output cycles protein kaput (846 aa).

A Nuclear localization signal motif is present at residues 32 to 47 (DKAKRVSRNKSEKKRR). Positions 34-84 (AKRVSRNKSEKKRRDQFNVLIKELGSMLPGNARKMDKSTVLQKSIDFLRKH) constitute a bHLH domain. Phosphoserine is present on residues serine 38 and serine 42. Lysine 67 is covalently cross-linked (Glycyl lysine isopeptide (Lys-Gly) (interchain with G-Cter in SUMO1)). PAS domains are found at residues 107–177 (NEEF…LLES) and 262–332 (FIKE…MQYG). Residues 336 to 379 (SCYYRFLTKGQQWIWLQTHYYITYHQWNSRPEFIVCTHTVVSYA) form the PAC domain. Residues 371–845 (CTHTVVSYAE…SLPDPSKVQP (475 aa)) are interaction with NR3C1. Disordered regions lie at residues 392-411 (EESL…SDNR) and 420-495 (ALER…SSLT). A Phosphoserine modification is found at serine 408. At serine 427 the chain carries Phosphoserine; by GSK3-beta. Serine 431 carries the phosphoserine modification. Residues 447-463 (DPSSTPTKIPTDTSTPP) show a composition bias toward polar residues. The tract at residues 450–570 (STPTKIPTDT…QGLQMFLQQS (121 aa)) is interaction with SIRT1. Phosphothreonine; by CDK5 is present on residues threonine 451 and threonine 461. A compositionally biased stretch (low complexity) spans 478-493 (SSFSSQSINSQSVGSS). The segment at 514-564 (FQFSAQLGAMQHLKDQLEQRTRMIEANIHRQQEELRKIQEQLQMVHGQGLQ) is implicated in the circadian rhythmicity. 2 stretches are compositionally biased toward low complexity: residues 624 to 637 (QQQT…QSQQ) and 644 to 654 (SQQTSLPSQTQ). 3 disordered regions span residues 624–654 (QQQT…SQTQ), 764–783 (EQQL…QPPQ), and 811–846 (STFP…VQPQ). Residues 811–829 (STFPQSHHQQHQSQQQQQL) show a composition bias toward low complexity. Lysine 842 is covalently cross-linked (Glycyl lysine isopeptide (Lys-Gly) (interchain with G-Cter in SUMO1)).

In terms of assembly, component of the circadian clock oscillator which includes the CRY proteins, CLOCK or NPAS2, BMAL1 or BMAL2, CSNK1D and/or CSNK1E, TIMELESS and the PER proteins. Interacts with KMT2A; in a circadian manner. Forms a heterodimer with BMAL1. The CLOCK-BMAL1 heterodimer is required for E-box-dependent transactivation, for CLOCK nuclear translocation and degradation, and for phosphorylation of both CLOCK and BMAL1. Interacts with NR3C1 in a ligand-dependent fashion. Interacts with ESR1 and estrogen stimulates this interaction. Interacts with the complex p35/CDK5. Interacts with RELA/p65. Interacts with KAT2B, CREBBP, EP300. Interacts with ID1 and ID3. Interacts with ID2. Interacts with MTA1. Interacts with OGA. Interacts with SIRT1. Interacts with CIPC. Interacts with EZH2. Interacts with EIF4E, PIWIL1 and DDX4. Interacts with PER2 and CRY1 and the interaction with PER and CRY proteins requires translocation to the nucleus. Interacts with PER1 and CRY2. Interaction of the CLOCK-BMAL1 heterodimer with PER or CRY inhibits transcription activation. Interaction of the CLOCK-BMAL1 with CRY1 is independent of DNA but with PER2 is off DNA. The CLOCK-BMAL1 heterodimer interacts with GSK3B. Interacts with KDM5A. Interacts with MYBBP1A. Interacts with THRAP3. Interacts with MED1; this interaction requires the presence of THRAP3. Interacts with NCOA2. The CLOCK-BMAL1 heterodimer interacts with PASD1. Interacts with ASS1 and IMPDH2; in a circadian manner. Interacts with NDUFA9. Interacts with PIWIL2 (via PIWI domain). Interacts with HNF4A. In terms of processing, ubiquitinated, leading to its proteasomal degradation. Post-translationally, O-glycosylated; contains O-GlcNAc. O-glycosylation by OGT prevents protein degradation by inhibiting ubiquitination. It also stabilizes the CLOCK-BMAL1 heterodimer thereby increasing CLOCK-BMAL1-mediated transcriptional activation of PER1/2/3 and CRY1/2. Phosphorylation is dependent on the CLOCK-BMAL1 heterodimer formation. Phosphorylation enhances the transcriptional activity, alters the subcellular localization and decreases the stability of the heterodimer by promoting its degradation. Phosphorylation shows circadian variations in the liver. May be phosphorylated by CSNK1D and CKSN1E. In terms of processing, sumoylation enhances its transcriptional activity and interaction with ESR1, resulting in up-regulation of ESR1 activity. Estrogen stimulates sumoylation. Desumoylation by SENP1 negatively regulates its transcriptional activity. Sumoylation stimulates cell proliferation and increases the proportion of S phase cells in breast cancer cell lines. Post-translationally, undergoes lysosome-mediated degradation in a time-dependent manner in the liver. Hair follicles (at protein level). Expressed in all tissues examined including spleen, thymus, prostate, testis, ovary, small intestine, colon, leukocytes, heart, brain, placenta, lung, liver, skeletal muscle, kidney and pancreas. Highest levels in testis and skeletal muscle. Low levels in thymus, lung and liver. Expressed in all brain regions with highest levels in cerebellum. Highly expressed in the suprachiasmatic nucleus (SCN).

Its subcellular location is the nucleus. The protein resides in the cytoplasm. It localises to the cytosol. It catalyses the reaction L-lysyl-[protein] + acetyl-CoA = N(6)-acetyl-L-lysyl-[protein] + CoA + H(+). With respect to regulation, there is conflicting data about the effect of NAD cofactors on activity. PubMed:11441146 suggests that the redox state of the cell can modulate the transcriptional activity of the CLOCK-BMAL1 heterodimer; NADH and NADPH enhance the DNA-binding activity of the heterodimer. PubMed:23229515 reports that NADH and NADPH have no significant effect on DNA-binding activity of the CLOCK-BMAL1 heterodimer. Functionally, transcriptional activator which forms a core component of the circadian clock. The circadian clock, an internal time-keeping system, regulates various physiological processes through the generation of approximately 24 hour circadian rhythms in gene expression, which are translated into rhythms in metabolism and behavior. It is derived from the Latin roots 'circa' (about) and 'diem' (day) and acts as an important regulator of a wide array of physiological functions including metabolism, sleep, body temperature, blood pressure, endocrine, immune, cardiovascular, and renal function. Consists of two major components: the central clock, residing in the suprachiasmatic nucleus (SCN) of the brain, and the peripheral clocks that are present in nearly every tissue and organ system. Both the central and peripheral clocks can be reset by environmental cues, also known as Zeitgebers (German for 'timegivers'). The predominant Zeitgeber for the central clock is light, which is sensed by retina and signals directly to the SCN. The central clock entrains the peripheral clocks through neuronal and hormonal signals, body temperature and feeding-related cues, aligning all clocks with the external light/dark cycle. Circadian rhythms allow an organism to achieve temporal homeostasis with its environment at the molecular level by regulating gene expression to create a peak of protein expression once every 24 hours to control when a particular physiological process is most active with respect to the solar day. Transcription and translation of core clock components (CLOCK, NPAS2, BMAL1, BMAL2, PER1, PER2, PER3, CRY1 and CRY2) plays a critical role in rhythm generation, whereas delays imposed by post-translational modifications (PTMs) are important for determining the period (tau) of the rhythms (tau refers to the period of a rhythm and is the length, in time, of one complete cycle). A diurnal rhythm is synchronized with the day/night cycle, while the ultradian and infradian rhythms have a period shorter and longer than 24 hours, respectively. Disruptions in the circadian rhythms contribute to the pathology of cardiovascular diseases, cancer, metabolic syndromes and aging. A transcription/translation feedback loop (TTFL) forms the core of the molecular circadian clock mechanism. Transcription factors, CLOCK or NPAS2 and BMAL1 or BMAL2, form the positive limb of the feedback loop, act in the form of a heterodimer and activate the transcription of core clock genes and clock-controlled genes (involved in key metabolic processes), harboring E-box elements (5'-CACGTG-3') within their promoters. The core clock genes: PER1/2/3 and CRY1/2 which are transcriptional repressors form the negative limb of the feedback loop and interact with the CLOCK|NPAS2-BMAL1|BMAL2 heterodimer inhibiting its activity and thereby negatively regulating their own expression. This heterodimer also activates nuclear receptors NR1D1/2 and RORA/B/G, which form a second feedback loop and which activate and repress BMAL1 transcription, respectively. Regulates the circadian expression of ICAM1, VCAM1, CCL2, THPO and MPL and also acts as an enhancer of the transactivation potential of NF-kappaB. Plays an important role in the homeostatic regulation of sleep. The CLOCK-BMAL1 heterodimer regulates the circadian expression of SERPINE1/PAI1, VWF, B3, CCRN4L/NOC, NAMPT, DBP, MYOD1, PPARGC1A, PPARGC1B, SIRT1, GYS2, F7, NGFR, GNRHR, BHLHE40/DEC1, ATF4, MTA1, KLF10 and also genes implicated in glucose and lipid metabolism. Promotes rhythmic chromatin opening, regulating the DNA accessibility of other transcription factors. The CLOCK-BMAL2 heterodimer activates the transcription of SERPINE1/PAI1 and BHLHE40/DEC1. The preferred binding motif for the CLOCK-BMAL1 heterodimer is 5'-CACGTGA-3', which contains a flanking adenine nucleotide at the 3-prime end of the canonical 6-nucleotide E-box sequence. CLOCK specifically binds to the half-site 5'-CAC-3', while BMAL1 binds to the half-site 5'-GTGA-3'. The CLOCK-BMAL1 heterodimer also recognizes the non-canonical E-box motifs 5'-AACGTGA-3' and 5'-CATGTGA-3'. CLOCK has an intrinsic acetyltransferase activity, which enables circadian chromatin remodeling by acetylating histones and nonhistone proteins, including its own partner BMAL1. Represses glucocorticoid receptor NR3C1/GR-induced transcriptional activity by reducing the association of NR3C1/GR to glucocorticoid response elements (GREs) via the acetylation of multiple lysine residues located in its hinge region. The acetyltransferase activity of CLOCK is as important as its transcription activity in circadian control. Acetylates metabolic enzymes IMPDH2 and NDUFA9 in a circadian manner. Facilitated by BMAL1, rhythmically interacts and acetylates argininosuccinate synthase 1 (ASS1) leading to enzymatic inhibition of ASS1 as well as the circadian oscillation of arginine biosynthesis and subsequent ureagenesis. Drives the circadian rhythm of blood pressure through transcriptional activation of ATP1B1. The chain is Circadian locomoter output cycles protein kaput (CLOCK) from Homo sapiens (Human).